The following is a 377-amino-acid chain: Actin-related protein T2 (377 aa).

The protein belongs to the actin family.

The protein resides in the cytoplasm. The protein localises to the cytoskeleton. The polypeptide is Actin-related protein T2 (ACTRT2) (Homo sapiens (Human)).